A 450-amino-acid chain; its full sequence is tRNA modification GTPase MnmE (450 aa).

(6S)-5-formyl-5,6,7,8-tetrahydrofolate is bound by residues Lys21, Glu78, and Lys117. Positions 213-376 (GHALSIVGKP…LSQKISAFFP (164 aa)) constitute a TrmE-type G domain. Asn223 contributes to the K(+) binding site. Residues 223-228 (NAGKSS), 242-248 (SDIKGTT), and 267-270 (DTAG) contribute to the GTP site. Ser227 serves as a coordination point for Mg(2+). Positions 242, 244, and 247 each coordinate K(+). A Mg(2+)-binding site is contributed by Thr248. Residue Lys450 participates in (6S)-5-formyl-5,6,7,8-tetrahydrofolate binding.

Belongs to the TRAFAC class TrmE-Era-EngA-EngB-Septin-like GTPase superfamily. TrmE GTPase family. In terms of assembly, homodimer. Heterotetramer of two MnmE and two MnmG subunits. K(+) serves as cofactor.

The protein localises to the cytoplasm. Functionally, exhibits a very high intrinsic GTPase hydrolysis rate. Involved in the addition of a carboxymethylaminomethyl (cmnm) group at the wobble position (U34) of certain tRNAs, forming tRNA-cmnm(5)s(2)U34. The protein is tRNA modification GTPase MnmE of Helicobacter pylori (strain Shi470).